Here is a 211-residue protein sequence, read N- to C-terminus: Thymidylate kinase (211 aa).

ATP is bound at residue 11-18; that stretch reads GPDGAGKT.

This sequence belongs to the thymidylate kinase family.

It carries out the reaction dTMP + ATP = dTDP + ADP. In terms of biological role, phosphorylation of dTMP to form dTDP in both de novo and salvage pathways of dTTP synthesis. This chain is Thymidylate kinase, found in Streptococcus agalactiae serotype Ia (strain ATCC 27591 / A909 / CDC SS700).